Reading from the N-terminus, the 290-residue chain is Small ribosomal subunit protein uS2 (290 aa).

This sequence belongs to the universal ribosomal protein uS2 family. As to quaternary structure, component of the small ribosomal subunit. Mature ribosomes consist of a small (40S) and a large (60S) subunit. The 40S subunit contains about 33 different proteins and 1 molecule of RNA (18S). The 60S subunit contains about 49 different proteins and 3 molecules of RNA (28S, 5.8S and 5S). Interacts with ribosomal protein S21.

The protein localises to the cytoplasm. Functionally, required for the assembly and/or stability of the 40S ribosomal subunit. Required for the processing of the 20S rRNA-precursor to mature 18S rRNA in a late step of the maturation of 40S ribosomal subunits. This Culex quinquefasciatus (Southern house mosquito) protein is Small ribosomal subunit protein uS2.